The following is a 157-amino-acid chain: SsrA-binding protein (157 aa).

This sequence belongs to the SmpB family.

It is found in the cytoplasm. Required for rescue of stalled ribosomes mediated by trans-translation. Binds to transfer-messenger RNA (tmRNA), required for stable association of tmRNA with ribosomes. tmRNA and SmpB together mimic tRNA shape, replacing the anticodon stem-loop with SmpB. tmRNA is encoded by the ssrA gene; the 2 termini fold to resemble tRNA(Ala) and it encodes a 'tag peptide', a short internal open reading frame. During trans-translation Ala-aminoacylated tmRNA acts like a tRNA, entering the A-site of stalled ribosomes, displacing the stalled mRNA. The ribosome then switches to translate the ORF on the tmRNA; the nascent peptide is terminated with the 'tag peptide' encoded by the tmRNA and targeted for degradation. The ribosome is freed to recommence translation, which seems to be the essential function of trans-translation. The sequence is that of SsrA-binding protein from Bacillus licheniformis (strain ATCC 14580 / DSM 13 / JCM 2505 / CCUG 7422 / NBRC 12200 / NCIMB 9375 / NCTC 10341 / NRRL NRS-1264 / Gibson 46).